A 532-amino-acid polypeptide reads, in one-letter code: ATP synthase subunit alpha (532 aa).

ATP is bound at residue 171–178; it reads GDRQTGKT.

It belongs to the ATPase alpha/beta chains family. In terms of assembly, F-type ATPases have 2 components, CF(1) - the catalytic core - and CF(0) - the membrane proton channel. CF(1) has five subunits: alpha(3), beta(3), gamma(1), delta(1), epsilon(1). CF(0) has three main subunits: a(1), b(2) and c(9-12). The alpha and beta chains form an alternating ring which encloses part of the gamma chain. CF(1) is attached to CF(0) by a central stalk formed by the gamma and epsilon chains, while a peripheral stalk is formed by the delta and b chains.

The protein resides in the cell membrane. It catalyses the reaction ATP + H2O + 4 H(+)(in) = ADP + phosphate + 5 H(+)(out). Functionally, produces ATP from ADP in the presence of a proton gradient across the membrane. The alpha chain is a regulatory subunit. This Amoebophilus asiaticus (strain 5a2) protein is ATP synthase subunit alpha.